The sequence spans 879 residues: Alanine--tRNA ligase (879 aa).

4 residues coordinate Zn(2+): histidine 566, histidine 570, cysteine 668, and histidine 672.

The protein belongs to the class-II aminoacyl-tRNA synthetase family. The cofactor is Zn(2+).

It is found in the cytoplasm. It carries out the reaction tRNA(Ala) + L-alanine + ATP = L-alanyl-tRNA(Ala) + AMP + diphosphate. Functionally, catalyzes the attachment of alanine to tRNA(Ala) in a two-step reaction: alanine is first activated by ATP to form Ala-AMP and then transferred to the acceptor end of tRNA(Ala). Also edits incorrectly charged Ser-tRNA(Ala) and Gly-tRNA(Ala) via its editing domain. The polypeptide is Alanine--tRNA ligase (Listeria monocytogenes serotype 4b (strain F2365)).